The chain runs to 399 residues: Elongation factor Tu (399 aa).

A tr-type G domain is found at 10 to 209; that stretch reads KPHVNIGTIG…EVDAYIPTPK (200 aa). The G1 stretch occupies residues 19–26; it reads GHVDHGKT. 19–26 is a binding site for GTP; that stretch reads GHVDHGKT. Threonine 26 serves as a coordination point for Mg(2+). Residues 60–64 are G2; that stretch reads GITIA. Positions 81–84 are G3; sequence DCPG. GTP is bound by residues 81-85 and 136-139; these read DCPGH and NKQD. A G4 region spans residues 136–139; that stretch reads NKQD. Residues 174-176 form a G5 region; sequence SAL.

Belongs to the TRAFAC class translation factor GTPase superfamily. Classic translation factor GTPase family. EF-Tu/EF-1A subfamily. As to quaternary structure, monomer.

It localises to the cytoplasm. It catalyses the reaction GTP + H2O = GDP + phosphate + H(+). Its function is as follows. GTP hydrolase that promotes the GTP-dependent binding of aminoacyl-tRNA to the A-site of ribosomes during protein biosynthesis. The polypeptide is Elongation factor Tu (Helicobacter pylori (strain P12)).